We begin with the raw amino-acid sequence, 511 residues long: U3 snoRNP-associated protein-like YAOH (511 aa).

A compositionally biased stretch (basic residues) spans 1–18 (MAPRPRKRVSRPKPRATS). Residues 1 to 117 (MAPRPRKRVS…EDEDEGEEAG (117 aa)) are disordered. 2 stretches are compositionally biased toward acidic residues: residues 44–53 (EDIESEDSDL) and 66–80 (DDGEEEEEEEEEQET). Positions 81-105 (AGEKKMRIAKELLKKVTDAARRRRE) are enriched in basic and acidic residues. WD repeat units lie at residues 158–197 (KHRQPVTAVVLSKDSDKGFSASKDGVIVHWDVETGKSEKY), 217–256 (KRSKQVLALAVSADGRYLASGGLDRHIHLWDVRSREHIQA), 259–298 (GHRGAISCLSFGPDSSELFSGSFDRKIMQWNAEDRTYMNC), 301–339 (GHQNEVLTMDALSKDRLLTVARDRTMHLWKIPEESQLLF), 342–380 (PATASLECCCFIDDKEFLTGSDDGSVELWSIMRKKPTHI), 412–451 (SAQSWVSAIAARRGSDLAASGAANGSVRLWAIEPDSKGIR), and 457–497 (RLDG…QNGV).

Belongs to the WD repeat RRP9 family.

The protein resides in the nucleus. Its subcellular location is the nucleolus. In terms of biological role, component of a nucleolar small nuclear ribonucleoprotein particle (snoRNP) thought to participate in the processing and modification of pre-ribosomal RNA. Essential for embryogenesis. The protein is U3 snoRNP-associated protein-like YAOH of Oryza sativa subsp. japonica (Rice).